A 100-amino-acid polypeptide reads, in one-letter code: Urease subunit gamma (100 aa).

This sequence belongs to the urease gamma subunit family. In terms of assembly, heterotrimer of UreA (gamma), UreB (beta) and UreC (alpha) subunits. Three heterotrimers associate to form the active enzyme.

The protein localises to the cytoplasm. It catalyses the reaction urea + 2 H2O + H(+) = hydrogencarbonate + 2 NH4(+). It participates in nitrogen metabolism; urea degradation; CO(2) and NH(3) from urea (urease route): step 1/1. This Cupriavidus pinatubonensis (strain JMP 134 / LMG 1197) (Cupriavidus necator (strain JMP 134)) protein is Urease subunit gamma.